Consider the following 241-residue polypeptide: Terpene cyclase terB (241 aa).

The next 5 helical transmembrane spans lie at 19-39 (LADT…GAMI), 48-68 (YCMG…YTLV), 75-95 (VELA…FAAT), 114-134 (LIFL…AAEI), and 137-157 (ALAY…GGVC). A glycan (N-linked (GlcNAc...) asparagine) is linked at Asn-163. 2 helical membrane passes run 169–189 (SVTL…FAFL) and 198–218 (FAWL…LADI).

This sequence belongs to the paxB family.

The protein resides in the membrane. The protein operates within secondary metabolite biosynthesis. Its function is as follows. Terpene cyclase; part of the gene cluster that mediates the biosynthesis of terpendoles, indole-diterpene (IDT) mycotoxins including terpendole I, terpendole K, terpendole C, as well as the kinesin Eg5 inhibitor terpendole E. Terpendoles biosynthesis begins with the synthesis of geranylgeranyl diphosphate (GGPP) by a yet unidentified GGPP synthase. Condensation of indole-3-glycerol phosphate with GGPP by the prenyltransferase terC then forms 3-geranylgeranylindole (3-GGI), followed by epoxidation and cyclization of this intermediate (by the FAD-dependent monooxygeanse terM and the terpene cyclase terB) to form paspaline. The cytochrome monooxygenase terQ then hydroxylates paspalline at C-11 to yield terpendole E. The cytochrome monooxygenase terP converts terpendole E to 13-desoxyterpendole I, and terQ converts 13-desoxyterpendole I into terpendole I. TerF and terK are required for conversion of terpendole I to terpendole C which is further converted to terpendole K. This is Terpene cyclase terB from Tolypocladium album (Soil fungus).